Consider the following 505-residue polypeptide: DNA repair protein RadA (505 aa).

Residues 10–27 (CSACGADHAQWFGRCPKC) form a C4-type zinc finger. Position 107 to 114 (107 to 114 (GDPGIGKS)) interacts with ATP. The short motif at 281-285 (KNRFG) is the RadA KNRFG motif element. A lon-protease-like region spans residues 380-505 (DAYLSVAGGL…KIEEDLGKKD (126 aa)). The disordered stretch occupies residues 485–505 (NTTDQGNGSEAKIEEDLGKKD). Residues 495 to 505 (AKIEEDLGKKD) are compositionally biased toward basic and acidic residues.

The protein belongs to the RecA family. RadA subfamily.

Its function is as follows. DNA-dependent ATPase involved in processing of recombination intermediates, plays a role in repairing DNA breaks. Stimulates the branch migration of RecA-mediated strand transfer reactions, allowing the 3' invading strand to extend heteroduplex DNA faster. Binds ssDNA in the presence of ADP but not other nucleotides, has ATPase activity that is stimulated by ssDNA and various branched DNA structures, but inhibited by SSB. Does not have RecA's homology-searching function. The protein is DNA repair protein RadA of Synechocystis sp. (strain ATCC 27184 / PCC 6803 / Kazusa).